The primary structure comprises 218 residues: MAFKDTFNKMISYFDTDEVNEVEEDVTASTDNVIPRSQQSVRASSHPKQEPRNNHVQQDHQARSQEQTRSQMHPKHGTSERYYQQSQPKEGHEMVDRRKRMSTSGIANRREQYQQSTCSDQTTIALKYPRKYEDAQEIVDLLIVNECVLIDFQFMLDAQARRCLDFIDGASKVLYGSLQKVGSSMYLLAPSNVSVNIEEMTIPHTTQDIGFDFDMKRR.

The interval 24–115 is disordered; that stretch reads EDVTASTDNV…IANRREQYQQ (92 aa). Residues 28–43 are compositionally biased toward polar residues; sequence ASTDNVIPRSQQSVRA. Positions 47-63 are enriched in basic and acidic residues; that stretch reads PKQEPRNNHVQQDHQAR.

Belongs to the SepF family. As to quaternary structure, homodimer. Interacts with FtsZ.

It localises to the cytoplasm. Cell division protein that is part of the divisome complex and is recruited early to the Z-ring. Probably stimulates Z-ring formation, perhaps through the cross-linking of FtsZ protofilaments. Its function overlaps with FtsA. This is Cell division protein SepF from Streptococcus pyogenes serotype M4 (strain MGAS10750).